The chain runs to 485 residues: Rhamnulokinase (485 aa).

8–12 (ASSGR) serves as a coordination point for ATP. Substrate contacts are provided by residues G78 and 231–233 (HDT). The active-site Proton acceptor is D232. T254 provides a ligand contact to ATP. N291 is a binding site for substrate. ATP is bound at residue Q299. C348 and C365 are joined by a disulfide. G397 contributes to the ATP binding site. C408 and C412 are disulfide-bonded.

Belongs to the rhamnulokinase family. The cofactor is Mg(2+).

It carries out the reaction L-rhamnulose + ATP = L-rhamnulose 1-phosphate + ADP + H(+). It functions in the pathway carbohydrate degradation; L-rhamnose degradation; glycerone phosphate from L-rhamnose: step 2/3. Its function is as follows. Involved in the catabolism of L-rhamnose (6-deoxy-L-mannose). Catalyzes the transfer of the gamma-phosphate group from ATP to the 1-hydroxyl group of L-rhamnulose to yield L-rhamnulose 1-phosphate. This Yersinia pestis bv. Antiqua (strain Antiqua) protein is Rhamnulokinase.